The sequence spans 652 residues: Protein phosphatase Slingshot homolog 3 (652 aa).

Over residues 1-16 (MALVTVSRSPPASGHS) the composition is skewed to polar residues. The disordered stretch occupies residues 1–31 (MALVTVSRSPPASGHSTPVGPTDRVIRRRGR). Alanine 2 carries the post-translational modification N-acetylalanine. Phosphoserine is present on residues serine 9, serine 37, serine 85, and serine 87. Residues 43-91 (GAVLGLQDGGEGNDAAEADPEPMEKPSGEEQPAEDQTDNGQGSQSPWKQ) are disordered. The span at 80–90 (DNGQGSQSPWK) shows a compositional bias: polar residues. The region spanning 266–321 (EQMEQAILAELWQVLDASDLDSVTSKEIRQALELRLGCPLQQYRDFIDNQMLLLMA) is the DEK-C domain. Residues 325–466 (RASRIFPHLY…LQTYQGILTA (142 aa)) enclose the Tyrosine-protein phosphatase domain. The Phosphocysteine intermediate role is filled by cysteine 410. Disordered regions lie at residues 484-526 (EPLA…LGLR), 540-580 (LLEP…KGGQ), and 610-652 (RAFQ…EGKA). The span at 540 to 552 (LLEPSSEPESTTE) shows a compositional bias: low complexity. Residues 642-652 (SVDDSREEGKA) show a composition bias toward basic and acidic residues.

This sequence belongs to the protein-tyrosine phosphatase family. In terms of assembly, does not bind to, or colocalize with, filamentous actin.

The protein localises to the cytoplasm. It localises to the cytoskeleton. It is found in the nucleus. It carries out the reaction O-phospho-L-tyrosyl-[protein] + H2O = L-tyrosyl-[protein] + phosphate. It catalyses the reaction O-phospho-L-seryl-[protein] + H2O = L-seryl-[protein] + phosphate. The enzyme catalyses O-phospho-L-threonyl-[protein] + H2O = L-threonyl-[protein] + phosphate. Functionally, protein phosphatase which may play a role in the regulation of actin filament dynamics. Can dephosphorylate and activate the actin binding/depolymerizing factor cofilin, which subsequently binds to actin filaments and stimulates their disassembly. In Rattus norvegicus (Rat), this protein is Protein phosphatase Slingshot homolog 3 (Ssh3).